The sequence spans 46 residues: Mu-segestritoxin-Sf1c (46 aa).

Intrachain disulfides connect C3/C19, C10/C22, C18/C42, and C24/C40. The segment at 31–33 is keys region for toxin activity; the sequence is RPW.

Belongs to the neurotoxin 16 (SFI) family. As to expression, expressed by the venom gland.

Its subcellular location is the secreted. Insecticidal toxin. It inhibits insect voltage-gated sodium channels (Nav) by partially blocking the channel pore in DUM neurons from the American cockroach, not by acting as a gating modifier. The inhibition is only partially reversible after prolonged washout. In vivo, the toxin causes flaccid paralysis followed by death when injected into Heliothis virescens larvae. It also causes uncoordinated movements followed by full paralysis to sheep blowflies (Lucilia cuprina). When the toxin is fused to snowdrop lectin, it is orally active against larvae of the tomato moth (Laconobia oleracea), the rice brown planthopper (Nilaparvata lugens), and the peach-potato aphid (Myzus persicae). The polypeptide is Mu-segestritoxin-Sf1c (Segestria florentina (Tube-web spider)).